A 350-amino-acid polypeptide reads, in one-letter code: Protein RecA (350 aa).

Gly-65–Thr-72 serves as a coordination point for ATP.

Belongs to the RecA family.

Its subcellular location is the cytoplasm. Can catalyze the hydrolysis of ATP in the presence of single-stranded DNA, the ATP-dependent uptake of single-stranded DNA by duplex DNA, and the ATP-dependent hybridization of homologous single-stranded DNAs. It interacts with LexA causing its activation and leading to its autocatalytic cleavage. The chain is Protein RecA from Clostridium tetani (strain Massachusetts / E88).